A 294-amino-acid chain; its full sequence is Thymidylate synthase (294 aa).

DUMP contacts are provided by residues Arg31 and 156–157 (RR). Residue Cys176 is the Nucleophile of the active site. DUMP-binding positions include 196–199 (RSAD), Asn207, and 237–239 (HIY). Position 199 (Asp199) interacts with (6R)-5,10-methylene-5,6,7,8-tetrahydrofolate. Ala293 is a (6R)-5,10-methylene-5,6,7,8-tetrahydrofolate binding site.

Belongs to the thymidylate synthase family. In terms of assembly, homodimer.

It catalyses the reaction dUMP + (6R)-5,10-methylene-5,6,7,8-tetrahydrofolate = 7,8-dihydrofolate + dTMP. The protein operates within pyrimidine metabolism; dTTP biosynthesis. The chain is Thymidylate synthase (70) from Saimiri sciureus (Common squirrel monkey).